The sequence spans 74 residues: Translational regulator CsrA (74 aa).

Belongs to the CsrA/RsmA family. As to quaternary structure, homodimer; the beta-strands of each monomer intercalate to form a hydrophobic core, while the alpha-helices form wings that extend away from the core.

The protein localises to the cytoplasm. Functionally, a translational regulator that binds mRNA to regulate translation initiation and/or mRNA stability. Usually binds in the 5'-UTR at or near the Shine-Dalgarno sequence preventing ribosome-binding, thus repressing translation. Its main target seems to be the major flagellin gene, while its function is anatagonized by FliW. This Alkaliphilus oremlandii (strain OhILAs) (Clostridium oremlandii (strain OhILAs)) protein is Translational regulator CsrA.